The chain runs to 925 residues: Aspulvinone E synthetase melA (925 aa).

Residues 11-434 (ETAAARNGDG…GGRAKETIII (424 aa)) form an adenylation (A) domain region. Positions 564–644 (SPKNDFEKGL…ELAAALDNLY (81 aa)) constitute a Carrier domain. S601 carries the post-translational modification O-(pantetheine 4'-phosphoryl)serine. Positions 663-923 (PLWLVHPGAG…KILRSALAER (261 aa)) are thioesterase (TE) domain.

Belongs to the ATP-dependent AMP-binding enzyme family.

The protein resides in the cytoplasm. In terms of biological role, nonribosomal peptide synthase; part of the gene cluster that mediates the biosynthesis of Asp-melanin, a pigment that confers resistance against UV light and hampers phagocytosis by soil amoeba. The nonribosomal peptide synthase melA converts 4-hydroxyphenylpyruvate (4-HPPA) to aspulvinone E. The tyrosinase tyrP then performs hydroxylations of both aromatic moieties of aspulvinone E. The product of tyrP is highly unstable, and, due to the high reactivity of methides and ortho-diquinones, the polymeric Asp-melanin forms spontaneously. The polypeptide is Aspulvinone E synthetase melA (Aspergillus terreus).